The primary structure comprises 241 residues: Endonuclease NucS (241 aa).

It belongs to the NucS endonuclease family.

The protein resides in the cytoplasm. Its function is as follows. Cleaves both 3' and 5' ssDNA extremities of branched DNA structures. This chain is Endonuclease NucS, found in Corynebacterium jeikeium (strain K411).